The following is a 282-amino-acid chain: Small ribosomal subunit protein uS3 (282 aa).

Residues 43-111 (IRQLMSTGME…QVQLNILEVK (69 aa)) form the KH type-2 domain. A disordered region spans residues 218-282 (QQAASAPSRG…AAVATEGSDA (65 aa)). Basic and acidic residues predominate over residues 230–262 (PRRDGDDRGPRRENSGPRRDGGNLRSQRNDRNE). The segment covering 263–276 (NAAVEAAPAAAAVA) has biased composition (low complexity).

Belongs to the universal ribosomal protein uS3 family. Part of the 30S ribosomal subunit. Forms a tight complex with proteins S10 and S14.

In terms of biological role, binds the lower part of the 30S subunit head. Binds mRNA in the 70S ribosome, positioning it for translation. This is Small ribosomal subunit protein uS3 from Renibacterium salmoninarum (strain ATCC 33209 / DSM 20767 / JCM 11484 / NBRC 15589 / NCIMB 2235).